A 691-amino-acid polypeptide reads, in one-letter code: Elongation factor G (691 aa).

Positions 8 to 282 constitute a tr-type G domain; it reads ERVRNIGIAA…AVIDYLPAPI (275 aa). GTP contacts are provided by residues 17 to 24, 81 to 85, and 135 to 138; these read AHIDAGKT, DTPGH, and NKMD.

The protein belongs to the TRAFAC class translation factor GTPase superfamily. Classic translation factor GTPase family. EF-G/EF-2 subfamily.

The protein resides in the cytoplasm. Functionally, catalyzes the GTP-dependent ribosomal translocation step during translation elongation. During this step, the ribosome changes from the pre-translocational (PRE) to the post-translocational (POST) state as the newly formed A-site-bound peptidyl-tRNA and P-site-bound deacylated tRNA move to the P and E sites, respectively. Catalyzes the coordinated movement of the two tRNA molecules, the mRNA and conformational changes in the ribosome. The chain is Elongation factor G from Prochlorococcus marinus (strain SARG / CCMP1375 / SS120).